Consider the following 307-residue polypeptide: Acyl transferase (307 aa).

Catalysis depends on charge relay system residues S116, D213, and H243.

The protein belongs to the LuxD family.

The protein operates within lipid metabolism; fatty acid reduction for biolumincescence. In terms of biological role, acyl transferase is part of the fatty acid reductase system required for aldehyde biosynthesis; it produces fatty acids for the luminescent reaction. The chain is Acyl transferase from Photorhabdus laumondii subsp. laumondii (strain DSM 15139 / CIP 105565 / TT01) (Photorhabdus luminescens subsp. laumondii).